A 147-amino-acid chain; its full sequence is Prefoldin subunit alpha 2 (147 aa).

It belongs to the prefoldin subunit alpha family. As to quaternary structure, heterohexamer of two alpha and four beta subunits.

It is found in the cytoplasm. Its function is as follows. Molecular chaperone capable of stabilizing a range of proteins. Seems to fulfill an ATP-independent, HSP70-like function in archaeal de novo protein folding. This is Prefoldin subunit alpha 2 (pfdA2) from Methanocaldococcus jannaschii (strain ATCC 43067 / DSM 2661 / JAL-1 / JCM 10045 / NBRC 100440) (Methanococcus jannaschii).